The primary structure comprises 344 residues: Lipase chaperone (344 aa).

A helical membrane pass occupies residues 14-34 (AAIYGVVGLAAIAGVAMWSGA).

Belongs to the lipase chaperone family.

Its subcellular location is the cell inner membrane. Its function is as follows. May be involved in the folding of the extracellular lipase during its passage through the periplasm. In Burkholderia cenocepacia (strain HI2424), this protein is Lipase chaperone.